Here is a 166-residue protein sequence, read N- to C-terminus: NAD(P)H-quinone oxidoreductase subunit I, chloroplastic (166 aa).

4Fe-4S ferredoxin-type domains lie at 55–84 and 95–124; these read GRIH…VDWK and LNYS…MTEE. [4Fe-4S] cluster-binding residues include Cys-64, Cys-67, Cys-70, Cys-74, Cys-104, Cys-107, Cys-110, and Cys-114.

This sequence belongs to the complex I 23 kDa subunit family. In terms of assembly, NDH is composed of at least 16 different subunits, 5 of which are encoded in the nucleus. [4Fe-4S] cluster serves as cofactor.

It is found in the plastid. The protein resides in the chloroplast thylakoid membrane. It carries out the reaction a plastoquinone + NADH + (n+1) H(+)(in) = a plastoquinol + NAD(+) + n H(+)(out). It catalyses the reaction a plastoquinone + NADPH + (n+1) H(+)(in) = a plastoquinol + NADP(+) + n H(+)(out). NDH shuttles electrons from NAD(P)H:plastoquinone, via FMN and iron-sulfur (Fe-S) centers, to quinones in the photosynthetic chain and possibly in a chloroplast respiratory chain. The immediate electron acceptor for the enzyme in this species is believed to be plastoquinone. Couples the redox reaction to proton translocation, and thus conserves the redox energy in a proton gradient. This chain is NAD(P)H-quinone oxidoreductase subunit I, chloroplastic, found in Pericome caudata (Mountain tail-leaf).